Here is a 275-residue protein sequence, read N- to C-terminus: Putative phosphoenolpyruvate synthase regulatory protein (275 aa).

157-164 (GVSRCGKT) is a binding site for ADP.

This sequence belongs to the pyruvate, phosphate/water dikinase regulatory protein family. PSRP subfamily.

It carries out the reaction [pyruvate, water dikinase] + ADP = [pyruvate, water dikinase]-phosphate + AMP + H(+). It catalyses the reaction [pyruvate, water dikinase]-phosphate + phosphate + H(+) = [pyruvate, water dikinase] + diphosphate. In terms of biological role, bifunctional serine/threonine kinase and phosphorylase involved in the regulation of the phosphoenolpyruvate synthase (PEPS) by catalyzing its phosphorylation/dephosphorylation. This chain is Putative phosphoenolpyruvate synthase regulatory protein, found in Bordetella bronchiseptica (strain ATCC BAA-588 / NCTC 13252 / RB50) (Alcaligenes bronchisepticus).